Reading from the N-terminus, the 281-residue chain is 2-dehydro-3-deoxyphosphooctonate aldolase (281 aa).

The protein belongs to the KdsA family.

It localises to the cytoplasm. The catalysed reaction is D-arabinose 5-phosphate + phosphoenolpyruvate + H2O = 3-deoxy-alpha-D-manno-2-octulosonate-8-phosphate + phosphate. Its pathway is carbohydrate biosynthesis; 3-deoxy-D-manno-octulosonate biosynthesis; 3-deoxy-D-manno-octulosonate from D-ribulose 5-phosphate: step 2/3. It participates in bacterial outer membrane biogenesis; lipopolysaccharide biosynthesis. This Pseudomonas syringae pv. syringae (strain B728a) protein is 2-dehydro-3-deoxyphosphooctonate aldolase.